Reading from the N-terminus, the 186-residue chain is Prorelaxin 1 (186 aa).

The first 22 residues, 1–22 (MSSRLLLQLLGFWLFLSQPCRA), serve as a signal peptide directing secretion. Disulfide bonds link Cys36–Cys173, Cys48–Cys186, and Cys172–Cys177. Residues 58–158 (SQEEPAPLAR…LKYLGSDAQS (101 aa)) constitute a propeptide, connecting peptide. Residue Gln163 is modified to Pyrrolidone carboxylic acid.

This sequence belongs to the insulin family. Heterodimer of a B chain and an A chain linked by two disulfide bonds.

The protein resides in the secreted. Its function is as follows. Relaxin is an ovarian hormone that acts with estrogen to produce dilatation of the birth canal in many mammals. The sequence is that of Prorelaxin 1 (Rln1) from Rattus norvegicus (Rat).